We begin with the raw amino-acid sequence, 505 residues long: Glutamate--tRNA ligase (505 aa).

Residues 12 to 22 carry the 'HIGH' region motif; that stretch reads PSPTGDPHVGT. The 'KMSKS' region motif lies at 253 to 257; that stretch reads KLSKR. Lys256 provides a ligand contact to ATP.

It belongs to the class-I aminoacyl-tRNA synthetase family. Glutamate--tRNA ligase type 1 subfamily. Monomer.

The protein localises to the cytoplasm. The enzyme catalyses tRNA(Glu) + L-glutamate + ATP = L-glutamyl-tRNA(Glu) + AMP + diphosphate. In terms of biological role, catalyzes the attachment of glutamate to tRNA(Glu) in a two-step reaction: glutamate is first activated by ATP to form Glu-AMP and then transferred to the acceptor end of tRNA(Glu). This Chlamydophila psittaci (strain ATCC VR-125 / 6BC) (Chlamydia psittaci) protein is Glutamate--tRNA ligase.